Here is a 389-residue protein sequence, read N- to C-terminus: Choline/ethanolaminephosphotransferase 1 (389 aa).

Residues Val-40–Thr-60 form a helical membrane-spanning segment. Asn-48 provides a ligand contact to CDP-choline. Residues Asp-95 and Asp-98 each coordinate Mg(2+). CDP-choline is bound at residue Arg-103. Asp-116 contacts Mg(2+). Residue His-117 is the Proton acceptor of the active site. Asp-120 lines the Mg(2+) pocket. The next 7 membrane-spanning stretches (helical) occupy residues Thr-141–Phe-161, Gly-176–Ala-196, Val-221–Val-241, Met-252–Trp-272, Leu-280–Val-300, Ser-322–Leu-344, and Val-350–Ile-370.

Belongs to the CDP-alcohol phosphatidyltransferase class-I family. It depends on Mg(2+) as a cofactor. Requires Mn(2+) as cofactor.

It localises to the membrane. The catalysed reaction is CDP-ethanolamine + a 1,2-diacyl-sn-glycerol = a 1,2-diacyl-sn-glycero-3-phosphoethanolamine + CMP + H(+). It catalyses the reaction CDP-choline + a 1,2-diacyl-sn-glycerol = a 1,2-diacyl-sn-glycero-3-phosphocholine + CMP + H(+). Its pathway is phospholipid metabolism; phosphatidylethanolamine biosynthesis; phosphatidylethanolamine from ethanolamine: step 3/3. It functions in the pathway phospholipid metabolism; phosphatidylcholine biosynthesis; phosphatidylcholine from phosphocholine: step 2/2. In terms of biological role, catalyzes both phosphatidylcholine and phosphatidylethanolamine biosynthesis from CDP-choline and CDP-ethanolamine, respectively. Has a higher cholinephosphotransferase activity than ethanolaminephosphotransferase activity. In Arabidopsis thaliana (Mouse-ear cress), this protein is Choline/ethanolaminephosphotransferase 1 (AAPT1).